A 48-amino-acid polypeptide reads, in one-letter code: MKKIVIVGGGIAGMGIANTLADKLKGKAEITVINKEDFYFAGPSRXIL.

In terms of assembly, monomer. Post-translationally, the blue color is due to an unidentified non-fluorescent cofactor, covalently bound to it.

Functionally, ambineela is a blue protein and has a pI of 8.7. This Acidianus ambivalens (Desulfurolobus ambivalens) protein is Ambineela.